Reading from the N-terminus, the 3948-residue chain is Hybrid PKS-NRPS synthetase ucsA (3948 aa).

In terms of domain architecture, Ketosynthase family 3 (KS3) spans 11 to 440 (NEPIAVIGSG…GTNAHAILER (430 aa)). Catalysis depends on for beta-ketoacyl synthase activity residues Cys-184, His-323, and His-363. The interval 548 to 881 (IFTGQGAQWP…FSTAIGQLWA (334 aa)) is malonyl-CoA:ACP transacylase (MAT) domain. Residues 940–1079 (HPLLGTLGAD…GHIRLTITDF (140 aa)) are N-terminal hotdog fold. The segment at 940-1254 (HPLLGTLGAD…IRLIPFAAAS (315 aa)) is dehydratase (DH) domain. One can recognise a PKS/mFAS DH domain in the interval 940–1256 (HPLLGTLGAD…LIPFAAASEA (317 aa)). His-972 (proton acceptor; for dehydratase activity) is an active-site residue. The segment at 1098-1256 (MTEVDQNLFY…LIPFAAASEA (159 aa)) is C-terminal hotdog fold. Asp-1161 serves as the catalytic Proton donor; for dehydratase activity. The interval 1299 to 1460 (LAHVVGQITH…LRAGFTGVET (162 aa)) is methyltransferase (MT) domain. The segment at 1989 to 2165 (TYILFGLAGA…ASVIDIGPIS (177 aa)) is ketoreductase (KR) domain. Positions 2275–2357 (DVARVLRHAI…GLVDFAVDNL (83 aa)) constitute a Carrier 1 domain. Ser-2317 carries the post-translational modification O-(pantetheine 4'-phosphoryl)serine. Over residues 2381–2404 (PKAKTDAPAAAPTPASATAPGSKS) the composition is skewed to low complexity. The tract at residues 2381–2473 (PKAKTDAPAA…SSQAASLESS (93 aa)) is disordered. Composition is skewed to polar residues over residues 2405–2418 (DGNV…ADQS) and 2426–2437 (PQPTAILTNATA). Over residues 2441–2456 (PVSPSLSVTGSTSSAA) the composition is skewed to low complexity. The span at 2462–2473 (PTSSQAASLESS) shows a compositional bias: polar residues. Residues 2489–2926 (EKTLPMSYGQ…PQIFNSSKVQ (438 aa)) are condensation (C) domain. Residues 2950–3355 (DIAAVQPTLT…GEFVLQARIK (406 aa)) form an adenylation (A) (KR) domain region. Residues 3483–3507 (PLTNKGGLKETPVARPTRYQNDPIP) form a disordered region. The Carrier 2 domain maps to 3513-3592 (SSPFSSLDQV…QMASLLDGKD (80 aa)). Ser-3552 bears the O-(pantetheine 4'-phosphoryl)serine mark. The tract at residues 3633 to 3852 (LTGATGFLGL…QFVPVEDVAN (220 aa)) is reductase (R) domain.

This sequence in the C-terminal section; belongs to the NRP synthetase family.

The protein operates within mycotoxin biosynthesis. Hybrid PKS-NRPS synthetase; part of the gene cluster that mediates the biosynthesis of UCS1025A, a member of the pyrrolizidinone family that acts as a strong telomerase inhibitor and displays potent antibacterial and antitumor properties. These compounds share a hemiaminal-containing pyrrolizidinone core fused with a gamma-lactone, giving a furopyrrolizidine that is connected to a decalin fragment. The polyketide synthase module (PKS) of the PKS-NRPS ucsA is responsible for the synthesis of the polyketide backbone via the condensation of an acetyl-CoA starter unit with 6 malonyl-CoA units. The downstream nonribosomal peptide synthetase (NRPS) module then amidates the carboxyl end of the polyketide with a 2S,3S-methylproline derived from L-isoleucine by the 2-oxoglutarate-dependent dioxygenase ucsF which converts L-isoleucine to (4S,5S)-4-methylpyrroline-5-carboxylate that is further converted to 2S,3S-methylproline by the pyrroline-5-carboxylate reductase ucsG. Reductive release of the completed aminoacyl polyketide from the assembly line can form the 3-pyrrolin-2-one structure via an intramolecular Knoevenagel reaction. Because ucsA lacks a designated enoylreductase (ER) domain, the required activity is provided the enoyl reductase ucsL. This keto acyclic precursor is the substrate of the Diels-Alderase ucsH, that catalyzes the Diels-Alder cycloaddition. Oxidation of the 3S-methyl group to a carboxylate by the cytochrome P450 monooxygenase ucsK allows an oxa-Michael cyclization that might involve the reductase/dehydrogenase ucsI and which furnishes the furopyrrolizidine. The oxidase ucsJ likely plays a critical role in stereoselective reduction of the C5-C6 double bond to afford the required R-configured carboxylate group. Further enolization and oxidation at C5 by an unidentified enzyme affords the last intermediate that can undergo oxa-Michael cyclization to yield UCS1025A. In Acremonium sp, this protein is Hybrid PKS-NRPS synthetase ucsA.